The chain runs to 767 residues: Golgin subfamily A member 1 (767 aa).

The tract at residues 13-58 is disordered; the sequence is TAVAQRPGGATRIPRSVSKESVASMGADSGDDFASDGSSSREDLSS. A phosphoserine mark is found at serine 30, serine 36, serine 41, serine 47, serine 50, and serine 51. Residues 50–657 are a coiled coil; sequence SSSREDLSSQ…RKTLQKELKI (608 aa). One can recognise a GRIP domain in the interval 688 to 737; sequence TDAREINFEYLKHVVLKFMSCRESEAFHLIKAVSVLLNFSQEEENMLKET. Residues 748–767 are disordered; sequence KPAPKGSIRPSISNPRIPWS.

Interacts with RAB6A. Directly interacts with TBC1D23. Interacts with FAM91A1; this interaction may be mediated by TBC1D23. Interacts with ARL1; this interaction recruits Golgin-97/GOLGA1 onto the Golgi apparatus. In terms of processing, MARylated by PARP12; MARylation is required for basolateral export of E-Cadherin.

The protein localises to the golgi apparatus membrane. The protein resides in the golgi apparatus. It localises to the trans-Golgi network membrane. Its subcellular location is the cytoplasmic vesicle. It is found in the secretory vesicle. The protein localises to the acrosome. Functionally, involved in vesicular trafficking at the Golgi apparatus level. Involved in endosome-to-Golgi trafficking. Mechanistically, captures transport vesicles arriving from endosomes via the protein TBC1D23. Recognized vesicles are then tethered to the trans-Golgi before subsequent SNARE engagement and vesicle fusion. Selectively regulates E-cadherin transport from the trans-Golgi network in tubulovesicular carriers. (Microbial infection) Plays an important role in poxvirus morphogenesis. Translocates into the viral factories where it may transport the membrane fragments and associated protein factors important for virus maturation to the sites of virion assembly. This is Golgin subfamily A member 1 (GOLGA1) from Homo sapiens (Human).